The primary structure comprises 354 residues: UDP-3-O-acylglucosamine N-acyltransferase (354 aa).

Histidine 258 serves as the catalytic Proton acceptor.

Belongs to the transferase hexapeptide repeat family. LpxD subfamily. Homotrimer.

The enzyme catalyses a UDP-3-O-[(3R)-3-hydroxyacyl]-alpha-D-glucosamine + a (3R)-hydroxyacyl-[ACP] = a UDP-2-N,3-O-bis[(3R)-3-hydroxyacyl]-alpha-D-glucosamine + holo-[ACP] + H(+). It functions in the pathway bacterial outer membrane biogenesis; LPS lipid A biosynthesis. In terms of biological role, catalyzes the N-acylation of UDP-3-O-acylglucosamine using 3-hydroxyacyl-ACP as the acyl donor. Is involved in the biosynthesis of lipid A, a phosphorylated glycolipid that anchors the lipopolysaccharide to the outer membrane of the cell. The protein is UDP-3-O-acylglucosamine N-acyltransferase of Sinorhizobium fredii (strain NBRC 101917 / NGR234).